Reading from the N-terminus, the 243-residue chain is Chromosome partition protein MukE (243 aa).

Positions 214–243 (DSLALEKQADLNEVDDNDELEDELDDEEHA) are disordered. The segment covering 225 to 243 (NEVDDNDELEDELDDEEHA) has biased composition (acidic residues).

It belongs to the MukE family. As to quaternary structure, interacts, and probably forms a ternary complex, with MukF and MukB. The complex formation is stimulated by calcium or magnesium.

It localises to the cytoplasm. It is found in the nucleoid. Functionally, involved in chromosome condensation, segregation and cell cycle progression. May participate in facilitating chromosome segregation by condensation DNA from both sides of a centrally located replisome during cell division. Probably acts via its interaction with MukB and MukF. In Pasteurella multocida (strain Pm70), this protein is Chromosome partition protein MukE.